The following is a 316-amino-acid chain: Pantothenate kinase (316 aa).

95-102 lines the ATP pocket; it reads GSVAVGKS.

It belongs to the prokaryotic pantothenate kinase family.

It is found in the cytoplasm. It carries out the reaction (R)-pantothenate + ATP = (R)-4'-phosphopantothenate + ADP + H(+). It functions in the pathway cofactor biosynthesis; coenzyme A biosynthesis; CoA from (R)-pantothenate: step 1/5. The chain is Pantothenate kinase from Hamiltonella defensa subsp. Acyrthosiphon pisum (strain 5AT).